Reading from the N-terminus, the 318-residue chain is D-alanine--D-alanine ligase (318 aa).

The 196-residue stretch at 116–311 folds into the ATP-grasp domain; that stretch reads KQVWQSLGIP…FQQLVLAILA (196 aa). Residue 142–197 coordinates ATP; sequence STELGFPLIVKPAHEGSSIGMAKVNSAQELVAAWQDAAKYDSQVLVEQWIHGPEFT. 3 residues coordinate Mg(2+): Asp265, Glu278, and Asn280.

The protein belongs to the D-alanine--D-alanine ligase family. The cofactor is Mg(2+). Mn(2+) serves as cofactor.

The protein localises to the cytoplasm. It carries out the reaction 2 D-alanine + ATP = D-alanyl-D-alanine + ADP + phosphate + H(+). Its pathway is cell wall biogenesis; peptidoglycan biosynthesis. Its function is as follows. Cell wall formation. The sequence is that of D-alanine--D-alanine ligase from Pseudomonas putida (strain GB-1).